The following is a 250-amino-acid chain: Vacuolar protein sorting-associated protein 22 homolog 1 (250 aa).

A coiled-coil region spans residues 35–55 (MKEQLSTFRSQLEEFARKHKN).

Belongs to the SNF8 family. In terms of assembly, component of the endosomal sorting complex required for transport II (ESCRT-II), composed of VPS22, VPS25 and VPS36.

It localises to the endosome. Component of the endosomal sorting complex required for transport II (ESCRT-II), which is required for multivesicular body (MVB) formation and sorting of endosomal cargo proteins into MVBs. The ESCRT-II complex is probably involved in the recruitment of the ESCRT-III complex. This Arabidopsis thaliana (Mouse-ear cress) protein is Vacuolar protein sorting-associated protein 22 homolog 1 (VP22-1).